Here is a 154-residue protein sequence, read N- to C-terminus: Proline dehydrogenase transcriptional activator (154 aa).

The region spanning Ile-5–Ile-66 is the HTH asnC-type domain. The segment at residues Val-24–Arg-43 is a DNA-binding region (H-T-H motif).

Its function is as follows. Transcriptional activator of the putA gene in response to proline. This Rhodobacter capsulatus (Rhodopseudomonas capsulata) protein is Proline dehydrogenase transcriptional activator (putR).